A 604-amino-acid chain; its full sequence is Elongation factor 4 (604 aa).

Residues 7–190 (SRLRNFCIIA…IVDRVPAPPD (184 aa)) enclose the tr-type G domain. GTP-binding positions include 19 to 24 (DHGKST) and 136 to 139 (NKID).

Belongs to the TRAFAC class translation factor GTPase superfamily. Classic translation factor GTPase family. LepA subfamily.

The protein localises to the cell inner membrane. It catalyses the reaction GTP + H2O = GDP + phosphate + H(+). Functionally, required for accurate and efficient protein synthesis under certain stress conditions. May act as a fidelity factor of the translation reaction, by catalyzing a one-codon backward translocation of tRNAs on improperly translocated ribosomes. Back-translocation proceeds from a post-translocation (POST) complex to a pre-translocation (PRE) complex, thus giving elongation factor G a second chance to translocate the tRNAs correctly. Binds to ribosomes in a GTP-dependent manner. The chain is Elongation factor 4 from Synechococcus sp. (strain RCC307).